A 503-amino-acid polypeptide reads, in one-letter code: Cytochrome P450 11B2, mitochondrial (503 aa).

The N-terminal 24 residues, 1-24, are a transit peptide targeting the mitochondrion; the sequence is MALRAKAEVCVAAPWLSLQRARAL. Phe381 contributes to the 21-hydroxyprogesterone binding site. Cys450 is a binding site for heme.

The protein belongs to the cytochrome P450 family. The cofactor is heme. Expressed sporadically in the zona glomerulosa (zG) of the adrenal cortex (conventional zonation), as well as in aldosterone-producing cell clusters (APCCs) composed of morphological zG cells in contact with the capsule (variegated zonation).

Its subcellular location is the mitochondrion inner membrane. The enzyme catalyses a steroid + 2 reduced [adrenodoxin] + O2 + 2 H(+) = an 11beta-hydroxysteroid + 2 oxidized [adrenodoxin] + H2O. It carries out the reaction 21-hydroxyprogesterone + 2 reduced [adrenodoxin] + O2 + 2 H(+) = corticosterone + 2 oxidized [adrenodoxin] + H2O. The catalysed reaction is corticosterone + 2 reduced [adrenodoxin] + O2 + 2 H(+) = 18-hydroxycorticosterone + 2 oxidized [adrenodoxin] + H2O. It catalyses the reaction 18-hydroxycorticosterone + 2 reduced [adrenodoxin] + O2 + 2 H(+) = aldosterone + 2 oxidized [adrenodoxin] + 2 H2O. The enzyme catalyses 11-deoxycortisol + 2 reduced [adrenodoxin] + O2 + 2 H(+) = cortisol + 2 oxidized [adrenodoxin] + H2O. It carries out the reaction 21-hydroxyprogesterone + 2 reduced [adrenodoxin] + O2 + 2 H(+) = 18-hydroxy-11-deoxycorticosterone + 2 oxidized [adrenodoxin] + H2O. The catalysed reaction is cortisol + 2 reduced [adrenodoxin] + O2 + 2 H(+) = 18-hydroxycortisol + 2 oxidized [adrenodoxin] + H2O. It catalyses the reaction 18-hydroxycortisol + 2 reduced [adrenodoxin] + O2 + 2 H(+) = 18-oxocortisol + 2 oxidized [adrenodoxin] + 2 H2O. It functions in the pathway steroid biosynthesis. Functionally, a cytochrome P450 monooxygenase that catalyzes the biosynthesis of aldosterone, the main mineralocorticoid in the human body responsible for salt and water homeostasis, thus involved in blood pressure regulation, arterial hypertension, and the development of heart failure. Catalyzes three sequential oxidative reactions of 11-deoxycorticosterone (21-hydroxyprogesterone), namely 11-beta hydroxylation, followed by two successive oxidations at C18 yielding 18-hydroxy and then 18-oxo intermediates (that would not leave the enzyme active site during the consecutive hydroxylation reactions), ending with the formation of aldosterone. Can also produce 18-hydroxycortisol and 18-oxocortisol, derived from successive oxidations of cortisol at C18, normally found at very low levels, but significantly increased in primary aldosteronism, the most common form of secondary hypertension. Mechanistically, uses molecular oxygen inserting one oxygen atom into a substrate and reducing the second into a water molecule. Two electrons are provided by NADPH via a two-protein mitochondrial transfer system comprising flavoprotein FDXR (adrenodoxin/ferredoxin reductase) and nonheme iron-sulfur protein FDX1 or FDX2 (adrenodoxin/ferredoxin). Could also be involved in the androgen metabolic pathway. In Homo sapiens (Human), this protein is Cytochrome P450 11B2, mitochondrial.